A 186-amino-acid chain; its full sequence is Pyridoxal 5'-phosphate synthase subunit PdxT (186 aa).

46 to 48 is an L-glutamine binding site; the sequence is GES. Cysteine 75 serves as the catalytic Nucleophile. Residues arginine 101 and 129–130 contribute to the L-glutamine site; that span reads IR. Residues histidine 165 and glutamate 167 each act as charge relay system in the active site.

The protein belongs to the glutaminase PdxT/SNO family. In terms of assembly, in the presence of PdxS, forms a dodecamer of heterodimers. Only shows activity in the heterodimer.

The catalysed reaction is aldehydo-D-ribose 5-phosphate + D-glyceraldehyde 3-phosphate + L-glutamine = pyridoxal 5'-phosphate + L-glutamate + phosphate + 3 H2O + H(+). It catalyses the reaction L-glutamine + H2O = L-glutamate + NH4(+). The protein operates within cofactor biosynthesis; pyridoxal 5'-phosphate biosynthesis. Functionally, catalyzes the hydrolysis of glutamine to glutamate and ammonia as part of the biosynthesis of pyridoxal 5'-phosphate. The resulting ammonia molecule is channeled to the active site of PdxS. This is Pyridoxal 5'-phosphate synthase subunit PdxT from Staphylococcus aureus (strain Mu3 / ATCC 700698).